A 217-amino-acid chain; its full sequence is Cytochrome b5 domain-containing protein 1 (217 aa).

One can recognise a Cytochrome b5 heme-binding domain in the interval 6–72 (PRFYTPREVS…NPKTGDVKTH (67 aa)). H41 and H72 together coordinate heme.

It belongs to the cytochrome b5 family.

The protein localises to the cytoplasm. It is found in the cytoskeleton. It localises to the cilium axoneme. Functionally, radial spoke stalk protein that binds heme under oxidizing conditions. Required for the coordinated beating of multiple cilia maybe by functioning in a redox signaling pathway. This is Cytochrome b5 domain-containing protein 1 (cyb5d1) from Xenopus tropicalis (Western clawed frog).